The chain runs to 158 residues: C-type lectin BML-1 (158 aa).

Residues 1 to 23 form the signal peptide; that stretch reads MGHFTFTGLCLLAMFLSLRGAEC. Cystine bridges form between cysteine 26–cysteine 37, cysteine 54–cysteine 154, cysteine 61–cysteine 156, and cysteine 129–cysteine 146. The region spanning 33-155 is the C-type lectin domain; sequence KNGLCYKVFS…CAALRPFLCQ (123 aa). Glutamine 119, aspartate 121, and glutamate 127 together coordinate Ca(2+). The Galactose-binding signature appears at 119–121; it reads QPD. Residue asparagine 134 is glycosylated (N-linked (GlcNAc...) asparagine). Positions 142 and 143 each coordinate Ca(2+).

The protein belongs to the true venom lectin family. In terms of assembly, homodimer; non-covalently linked. Expressed by the venom gland.

The protein resides in the secreted. In terms of biological role, recombinant C-type lectin BML-1 is able to agglutinate erythrocytes. May be a calcium-dependent lectin. The polypeptide is C-type lectin BML-1 (Bungarus multicinctus (Many-banded krait)).